The following is an 825-amino-acid chain: AP-3 complex subunit delta (825 aa).

HEAT repeat units lie at residues 131–168 (GLAR…QYPE), 169–205 (AISA…RAPK), 207–243 (YLEF…YEPR), 244–281 (LVKK…LVGH), 285–323 (DKLA…THPS), 324–360 (LVSA…KENI), 363–400 (IVKT…KSTY), 469–513 (EKRT…LAHR), 515–547 (LLQA…LWVE), and 548–584 (KIVS…IVNT). A disordered region spans residues 787–825 (STNQGSMGDIVLETKSPIRVEKKKSKKKKKKKEKTSGKE). The segment covering 807-819 (EKKKSKKKKKKKE) has biased composition (basic residues).

The protein belongs to the adaptor complexes large subunit family. As to quaternary structure, adaptor protein complex 3 (AP-3) is a heterotetramer composed of 2 large adaptins (apl5 and apl6), a medium adaptin (apm3) and a small adaptin (aps3).

It localises to the golgi apparatus. The protein resides in the cytoplasmic vesicle. The protein localises to the clathrin-coated vesicle membrane. Its function is as follows. Part of the AP-3 complex, an adaptor-related complex which is not clathrin-associated. The complex is associated with the Golgi region as well as more peripheral structures. It facilitates the budding of vesicles from the Golgi membrane and may be directly involved in trafficking to the vacuole. The polypeptide is AP-3 complex subunit delta (apl5) (Schizosaccharomyces pombe (strain 972 / ATCC 24843) (Fission yeast)).